We begin with the raw amino-acid sequence, 272 residues long: Transcription factor GAL1 (272 aa).

The segment covering 1–10 (MAGKNMSSRL) has biased composition (polar residues). Disordered stretches follow at residues 1–49 (MAGK…SPET), 102–215 (YGAI…SRDI), and 246–272 (KGHLQKDCPDRKQRRGDKRKSGGAMDY). 2 stretches are compositionally biased toward acidic residues: residues 113–122 (ESDDDQDEEQ) and 152–174 (SEQDSDASSDSDSDDDEDLDEAE). The segment covering 175-215 (LLIKAERKEAAAKLRAERKAQRKADEVKSKQMAERRRSRDI) has biased composition (basic and acidic residues). The CCHC-type zinc finger occupies 240-255 (CHVCGQKGHLQKDCPD).

It localises to the nucleus. Its function is as follows. Transcription factor; part of the gene cluster that mediates the biosynthesis of liamocins, glycolipids (also called heavy oils) composed of a single mannitol or arabitol headgroup linked to either three, four or even six 3,5-dihydroxydecanoic ester tail-groups. Positively regulates the expression of PKS1 and EST1 that mediate the biosynthesis of liamocins. In Aureobasidium melanogenum (Aureobasidium pullulans var. melanogenum), this protein is Transcription factor GAL1.